The following is a 55-amino-acid chain: Large ribosomal subunit protein bL33m (55 aa).

It belongs to the bacterial ribosomal protein bL33 family. Component of the mitochondrial large ribosomal subunit (mt-LSU). Mature yeast 74S mitochondrial ribosomes consist of a small (37S) and a large (54S) subunit. The 37S small subunit contains a 15S ribosomal RNA (15S mt-rRNA) and at least 32 different proteins. The 54S large subunit contains a 21S rRNA (21S mt-rRNA) and at least 45 different proteins. bL33m stabilizes the tRNA acceptor stem in the E-site.

Its subcellular location is the mitochondrion. Component of the mitochondrial ribosome (mitoribosome), a dedicated translation machinery responsible for the synthesis of mitochondrial genome-encoded proteins, including at least some of the essential transmembrane subunits of the mitochondrial respiratory chain. The mitoribosomes are attached to the mitochondrial inner membrane and translation products are cotranslationally integrated into the membrane. The protein is Large ribosomal subunit protein bL33m (mrpl39) of Schizosaccharomyces pombe (strain 972 / ATCC 24843) (Fission yeast).